Consider the following 401-residue polypeptide: Phosphoglycerate kinase (401 aa).

Substrate is bound by residues 26 to 28 (DLN), R41, 64 to 67 (HLGR), R123, and R156. ATP is bound by residues K207, G298, E329, and 355 to 358 (GGDS).

Belongs to the phosphoglycerate kinase family. In terms of assembly, monomer.

It localises to the cytoplasm. It carries out the reaction (2R)-3-phosphoglycerate + ATP = (2R)-3-phospho-glyceroyl phosphate + ADP. It functions in the pathway carbohydrate degradation; glycolysis; pyruvate from D-glyceraldehyde 3-phosphate: step 2/5. The protein is Phosphoglycerate kinase of Bdellovibrio bacteriovorus (strain ATCC 15356 / DSM 50701 / NCIMB 9529 / HD100).